Consider the following 940-residue polypeptide: Gamma-aminobutyric acid type B receptor subunit 2 (940 aa).

Positions 1 to 40 (MASPPSSGQPRPPPPPPPPARLLLPLLLSLLLSLAPGAWG) are cleaved as a signal peptide. Residues 41–482 (WARGAPRPPP…LRKISLPLYS (442 aa)) are Extracellular-facing. An N-linked (GlcNAc...) asparagine glycan is attached at Asn89. 3 cysteine pairs are disulfide-bonded: Cys107-Cys134, Cys236-Cys265, and Cys264-Cys301. Asn297, Asn388, Asn403, and Asn452 each carry an N-linked (GlcNAc...) asparagine glycan. A helical transmembrane segment spans residues 483–503 (ILSALTILGMIMASAFLFFNI). Residues 504–521 (KNRNQKLIKMSSPYMNNL) are Cytoplasmic-facing. The chain crosses the membrane as a helical span at residues 522 to 542 (IILGGMLSYASIFLFGLDGSF). The Extracellular segment spans residues 543-550 (VSEKTFET). Residues 551 to 571 (LCTVRTWILTVGYTTAFGAMF) form a helical membrane-spanning segment. Over 572–596 (AKTWRVHAIFKNVKMKKKIIKDQKL) the chain is Cytoplasmic. The helical transmembrane segment at 597-617 (LVIVGGMLLIDLCILICWQAV) threads the bilayer. The Extracellular portion of the chain corresponds to 618–653 (DPLRRTVERYSMEPDPAGRDISIRPLLEHCENTHMT). A helical transmembrane segment spans residues 654–674 (IWLGIVYAYKGLLMLFGCFLA). The Cytoplasmic segment spans residues 675-690 (WETRNVSIPALNDSKY). Residues 691–711 (IGMSVYNVGIMCIIGAAVSFL) form a helical membrane-spanning segment. The Extracellular portion of the chain corresponds to 712-719 (TRDQPNVQ). Residues 720 to 740 (FCIVALVIIFCSTITLCLVFV) traverse the membrane as a helical segment. The Cytoplasmic segment spans residues 741-940 (PKLITLRTNP…PSFRVMVSGL (200 aa)). The disordered stretch occupies residues 762-789 (TQNQKKEDSKTSTSVTSVNQASTSRLEG). The segment covering 772-786 (TSTSVTSVNQASTSR) has biased composition (polar residues). Phosphoserine occurs at positions 775 and 778. The stretch at 781–818 (QASTSRLEGLQSENHRLRMKITELDKDLEEVTMQLQDT) forms a coiled coil. Thr818 carries the phosphothreonine modification. Residues Ser883, Ser892, Ser912, Ser915, Ser919, and Ser923 each carry the phosphoserine modification.

It belongs to the G-protein coupled receptor 3 family. GABA-B receptor subfamily. Heterodimer of GABBR1 and GABBR2. Homodimers may form, but are inactive. Interacts (via C-terminus) with ATF4 (via leucine zipper domain).

It localises to the cell membrane. The protein localises to the postsynaptic cell membrane. Component of a heterodimeric G-protein coupled receptor for GABA, formed by GABBR1 and GABBR2. Within the heterodimeric GABA receptor, only GABBR1 seems to bind agonists, while GABBR2 mediates coupling to G proteins. Ligand binding causes a conformation change that triggers signaling via guanine nucleotide-binding proteins (G proteins) and modulates the activity of down-stream effectors, such as adenylate cyclase. Signaling inhibits adenylate cyclase, stimulates phospholipase A2, activates potassium channels, inactivates voltage-dependent calcium-channels and modulates inositol phospholipid hydrolysis. Plays a critical role in the fine-tuning of inhibitory synaptic transmission. Pre-synaptic GABA receptor inhibits neurotransmitter release by down-regulating high-voltage activated calcium channels, whereas postsynaptic GABA receptor decreases neuronal excitability by activating a prominent inwardly rectifying potassium (Kir) conductance that underlies the late inhibitory postsynaptic potentials. Not only implicated in synaptic inhibition but also in hippocampal long-term potentiation, slow wave sleep, muscle relaxation and antinociception. Interacts with KCTD8, KCTD12 and KCTD16; this interaction determines the pharmacology and kinetics of the receptor response, the KCTD proteins markedly accelerating the GABA-B response, although to different extents. In Mus musculus (Mouse), this protein is Gamma-aminobutyric acid type B receptor subunit 2 (Gabbr2).